A 184-amino-acid chain; its full sequence is Probable DNA-directed RNA polymerase subunit delta (184 aa).

The HTH HARE-type domain occupies 14–82 (KSFIDMAHTL…GENNWGLRDW (69 aa)). The segment at 114–184 (LLGEEEEEID…FNDDPDDDKI (71 aa)) is disordered. A compositionally biased stretch (acidic residues) spans 117–184 (EEEEEIDDQE…FNDDPDDDKI (68 aa)).

The protein belongs to the RpoE family. RNAP is composed of a core of 2 alpha, a beta and a beta' subunits. The core is associated with a delta subunit and one of several sigma factors.

Functionally, participates in both the initiation and recycling phases of transcription. In the presence of the delta subunit, RNAP displays an increased specificity of transcription, a decreased affinity for nucleic acids, and an increased efficiency of RNA synthesis because of enhanced recycling. This is Probable DNA-directed RNA polymerase subunit delta from Staphylococcus carnosus (strain TM300).